We begin with the raw amino-acid sequence, 460 residues long: MSHVRSAPAGKSGGGGGSTPAKRGRPFGSTTGSGAAAAAAAAAIGDAAAPAALVGPSLQVLTALSDQNNKRIVLALQSGLKSEILWALNALTVLSFKEKDDLRRDTTPLAKVPGLLDALLQVIDDWRDIAMPKDHTKPPRVRTLGVNTTLSGFGHENVEKVYSDTTTPSDDQTKTADSTVTKKRSAGFLFDEEGLFNVDDEGRTEKQQCAVAASNIIRNFSFMPENETVMVQHRHCLETVFQCLEDQNTEDDELITNMLETLVNLAPVLDLRIFSSSKPSFIKITEKRAVQAIMGMLASSIRVWHCAAAELIGRLIINPDNEPFLLPAIPQIYKRLVDLLSVPAVDAQAAAISALYNVAEVNMDFRLKLASERWAVDRLLKVVKTPHPVPEVCRKASMIVESLVSEPQNRMHLLVHENTFAEILTSEGKYSDTFARILYELTARPSNKVTAGQAIWGNIN.

Residues 1-10 (MSHVRSAPAG) show a composition bias toward low complexity. Residues 1–32 (MSHVRSAPAGKSGGGGGSTPAKRGRPFGSTTG) form a disordered region. 3 ARM repeats span residues 225-267 (ENET…NLAP), 321-360 (NEPFLLPAIPQIYKRLVDLLSVPAVDAQAAAISALYNVAE), and 364-405 (DFRL…SLVS).

In terms of assembly, interacts with CHR719, SWI3A and SWI3C. Expressed at low levels in coleoptiles, leaf tongues, mature leaves and nodes during the vegetative phase. Highly expressed in reproductive tissues such as young panicles, early developing seeds, embryos and endosperms.

It is found in the nucleus. Its function is as follows. Plays critical roles in both embryo and endosperm development. Required for free nuclei division and cellularization in early endosperm development, by preventing premature cell death in the endosperm. Involved in the regulation of pattern formation and organ differentiation during embryogenesis, by regulating genes involved in the early stages of seed development. In Oryza sativa subsp. japonica (Rice), this protein is Armadillo repeat-containing protein LFR.